Consider the following 76-residue polypeptide: UPF0248 protein MMP0286 (76 aa).

Belongs to the UPF0248 family.

In Methanococcus maripaludis (strain DSM 14266 / JCM 13030 / NBRC 101832 / S2 / LL), this protein is UPF0248 protein MMP0286.